Consider the following 507-residue polypeptide: Solute carrier family 2, facilitated glucose transporter member 6 (507 aa).

Residues 1–28 (MQEPLLGAEGPDYDTFPEKPPPSPGDRA) are disordered. Over 1 to 37 (MQEPLLGAEGPDYDTFPEKPPPSPGDRARVGTLQNKR) the chain is Cytoplasmic. Residues 5–6 (LL) carry the Dileucine internalization motif motif. Phosphoserine is present on Ser-23. The helical transmembrane segment at 38-58 (VFLATFAAVLGNFSFGYALVY) threads the bilayer. Topologically, residues 59–81 (TSPVIPALERSLDPDLHLTKSQA) are extracellular. Residues 82 to 102 (SWFGSVFTLGAAAGGLSAMIL) form a helical membrane-spanning segment. The Cytoplasmic segment spans residues 103–111 (NDLLGRKLS). A helical membrane pass occupies residues 112–132 (IMFSAVPSAAGYALMAGAHGL). Topologically, residues 133 to 140 (WMLLLGRT) are extracellular. The helical transmembrane segment at 141-161 (LTGFAGGLTAACIPVYVSEIA) threads the bilayer. The Cytoplasmic portion of the chain corresponds to 162–168 (PPGVRGA). The chain crosses the membrane as a helical span at residues 169 to 189 (LGATPQLMAVFGSLSLYALGL). Gln-174 contacts a D-hexose. The Extracellular segment spans residues 190–194 (LLPWR). Residues 195-215 (WLAVAGEAPVLIMILLLSFMP) traverse the membrane as a helical segment. The Cytoplasmic segment spans residues 216–289 (NSPRFLLSRG…LLMRLLQQLT (74 aa)). 286–287 (QQ) is an a D-hexose binding site. Residues 290–310 (GITPILVYLQSIFDSTAVLLP) form a helical membrane-spanning segment. At 311–314 (PKDD) the chain is on the extracellular side. A helical membrane pass occupies residues 315 to 335 (AAIVGAVRLLSVLIAALTMDL). The Cytoplasmic segment spans residues 336-339 (AGRK). Residues 340-360 (VLLFVSAAIMFAANLTLGLYI) traverse the membrane as a helical segment. Residues 361–395 (HFGPRPLSPNSTAGLESESWGDLAQPLAAPAGYLT) are Extracellular-facing. Asn-370 carries an N-linked (GlcNAc...) asparagine glycan. The chain crosses the membrane as a helical span at residues 396 to 416 (LVPLLATMLFIMGYAVGWGPI). Residues 417-435 (TWLLMSEVLPLRARGVASG) are Cytoplasmic-facing. Trp-418 is an a D-hexose binding site. A helical membrane pass occupies residues 436–456 (LCVLASWLTAFVLTKSFLPVV). Residues 457-462 (STFGLQ) lie on the Extracellular side of the membrane. Residues 463–483 (VPFFFFAAICLVSLVFTGCCV) traverse the membrane as a helical segment. Topologically, residues 484-507 (PETKGRSLEQIESFFRTGRRSFLR) are cytoplasmic.

This sequence belongs to the major facilitator superfamily. Sugar transporter (TC 2.A.1.1) family. Glucose transporter subfamily. Highly expressed in brain, spleen and peripheral blood leukocytes.

It is found in the lysosome membrane. In terms of biological role, probable sugar transporter that acts as a regulator of glycolysis in macrophages. Does not transport glucose. The polypeptide is Solute carrier family 2, facilitated glucose transporter member 6 (Homo sapiens (Human)).